The sequence spans 142 residues: Small heat shock protein IbpB (142 aa).

The 112-residue stretch at 26 to 137 (AGESQSFPPY…AAQRIAISER (112 aa)) folds into the sHSP domain.

It belongs to the small heat shock protein (HSP20) family. In terms of assembly, homodimer. Forms homomultimers of about 100-150 subunits at optimal growth temperatures. Conformation changes to oligomers at high temperatures or high ionic concentrations. The decrease in size of the multimers is accompanied by an increase in chaperone activity.

It is found in the cytoplasm. Its function is as follows. Associates with aggregated proteins, together with IbpA, to stabilize and protect them from irreversible denaturation and extensive proteolysis during heat shock and oxidative stress. Aggregated proteins bound to the IbpAB complex are more efficiently refolded and reactivated by the ATP-dependent chaperone systems ClpB and DnaK/DnaJ/GrpE. Its activity is ATP-independent. The chain is Small heat shock protein IbpB from Escherichia coli O7:K1 (strain IAI39 / ExPEC).